A 541-amino-acid polypeptide reads, in one-letter code: Periplasmic oligopeptide-binding protein OppA (541 aa).

The first 20 residues, 1–20, serve as a signal peptide directing secretion; that stretch reads MQHKLLFSAIALALSYSAQA.

This sequence belongs to the bacterial solute-binding protein 5 family. As to quaternary structure, the complex is composed of two ATP-binding proteins (OppD and OppF), two transmembrane proteins (OppB and OppC) and a solute-binding protein (OppA).

It is found in the periplasm. In terms of biological role, part of the ABC transporter complex OppABCDF involved in the uptake of oligopeptides. Plays an important nutritional role. Binds peptides containing from two to five amino acid residues. The polypeptide is Periplasmic oligopeptide-binding protein OppA (oppA) (Haemophilus influenzae (strain ATCC 51907 / DSM 11121 / KW20 / Rd)).